We begin with the raw amino-acid sequence, 510 residues long: Glycerol kinase (510 aa).

Threonine 13 serves as a coordination point for ADP. ATP-binding residues include threonine 13 and threonine 14. Threonine 13 lines the sn-glycerol 3-phosphate pocket. Residue arginine 17 coordinates ADP. 4 residues coordinate sn-glycerol 3-phosphate: arginine 83, glutamate 84, tyrosine 135, and aspartate 255. Glycerol-binding residues include arginine 83, glutamate 84, tyrosine 135, aspartate 255, and glutamine 256. ADP-binding residues include threonine 277, glycine 321, glycine 421, and asparagine 425. Residues threonine 277, glycine 321, and glycine 421 each coordinate ATP.

The protein belongs to the FGGY kinase family.

The catalysed reaction is glycerol + ATP = sn-glycerol 3-phosphate + ADP + H(+). It participates in polyol metabolism; glycerol degradation via glycerol kinase pathway; sn-glycerol 3-phosphate from glycerol: step 1/1. In terms of biological role, key enzyme in the regulation of glycerol uptake and metabolism. Catalyzes the phosphorylation of glycerol to yield sn-glycerol 3-phosphate. The protein is Glycerol kinase of Halobacterium salinarum (strain ATCC 29341 / DSM 671 / R1).